Consider the following 487-residue polypeptide: UDP-N-acetylmuramate--L-alanine ligase (487 aa).

126 to 132 (GTHGKTT) contributes to the ATP binding site.

This sequence belongs to the MurCDEF family.

Its subcellular location is the cytoplasm. It carries out the reaction UDP-N-acetyl-alpha-D-muramate + L-alanine + ATP = UDP-N-acetyl-alpha-D-muramoyl-L-alanine + ADP + phosphate + H(+). The protein operates within cell wall biogenesis; peptidoglycan biosynthesis. Its function is as follows. Cell wall formation. This Psychromonas ingrahamii (strain DSM 17664 / CCUG 51855 / 37) protein is UDP-N-acetylmuramate--L-alanine ligase.